The chain runs to 65 residues: UPF0434 protein HS_0657 (65 aa).

It belongs to the UPF0434 family.

This Histophilus somni (strain 129Pt) (Haemophilus somnus) protein is UPF0434 protein HS_0657.